Reading from the N-terminus, the 657-residue chain is 9-cis-epoxycarotenoid dioxygenase NCED9, chloroplastic (657 aa).

Residues H357, H406, H471, and H642 each contribute to the Fe cation site.

The protein belongs to the carotenoid oxygenase family. Fe(2+) serves as cofactor. Expressed in developing siliques, embryo and endosperm.

It is found in the plastid. The protein resides in the chloroplast stroma. It carries out the reaction a 9-cis-epoxycarotenoid + O2 = a 12'-apo-carotenal + 2-cis,4-trans-xanthoxin. The catalysed reaction is 9-cis-violaxanthin + O2 = (3S,5R,6S)-5,6-epoxy-3-hydroxy-5,6-dihydro-12'-apo-beta-caroten-12'-al + 2-cis,4-trans-xanthoxin. It catalyses the reaction 9'-cis-neoxanthin + O2 = (3S,5R,6R)-3,5-dihydroxy-6,7-didehydro-5,6-dihydro-12'-apo-beta-caroten-12'-al + 2-cis,4-trans-xanthoxin. Has a 11,12(11',12') 9-cis epoxycarotenoid cleavage activity. Catalyzes the first step of abscisic-acid biosynthesis from carotenoids. Contributes probably to abscisic acid synthesis for the induction of seed dormancy. In Arabidopsis thaliana (Mouse-ear cress), this protein is 9-cis-epoxycarotenoid dioxygenase NCED9, chloroplastic (NCED9).